The sequence spans 380 residues: Endo-chitosanase C (380 aa).

The N-terminal stretch at 1–22 (MPIKSFASRLALSLAICGTAMG) is a signal peptide. The stretch at 276–304 (CSWPGHCAGATCSSNDDCSDDLTCQNGKC) is one R3-1 repeat. Residues 311 to 341 (ETCSWEGHCKGATCSSNDDCSDELACISGIC) form an R3-2 repeat. Residues 348 to 378 (ETCEWEGHCEGASCSSHDDCDGNLACKNGKC) form an R3-3 repeat.

This sequence belongs to the glycosyl hydrolase 75 family.

The protein resides in the secreted. It carries out the reaction Endohydrolysis of beta-(1-&gt;4)-linkages between D-glucosamine residues in a partly acetylated chitosan.. Functionally, chitosanase catalyzing the endo-type cleavage of chitosan, the deacylated form of chitin. Chitosanase may be crucial in the degradation of the deacetylated portion of chitin in the fungal cell wall. Chitoolisaccharides produced by the hydrolysis of partially N-acetylated chitosan are known to have many biological activities, including antibacterial activity, immune-enhancing effects, and elicitor activity. The polypeptide is Endo-chitosanase C (csnC) (Aspergillus oryzae (Yellow koji mold)).